We begin with the raw amino-acid sequence, 399 residues long: Long-chain primary alcohol dehydrogenase AdhA (399 aa).

This sequence belongs to the iron-containing alcohol dehydrogenase family. In terms of assembly, homotetramer. The cofactor is Zn(2+).

It catalyses the reaction a primary alcohol + NADP(+) = an aldehyde + NADPH + H(+). In terms of biological role, alcohol dehydrogenase active against primary long-chain alcohols. Pentan-1-ol is the optimum substrate in vitro, but also shows efficient dehydrogenase activity on propanol, hexanol, and ethanol. This chain is Long-chain primary alcohol dehydrogenase AdhA (adhA), found in Thermoanaerobacter ethanolicus (Clostridium thermohydrosulfuricum).